The following is a 420-amino-acid chain: Acyl-coenzyme A amino acid N-acyltransferase 2 (420 aa).

Active-site charge relay system residues include Ser235, Asp329, and His363. The short motif at Ser418–Leu420 is the Microbody targeting signal element.

The protein belongs to the C/M/P thioester hydrolase family.

It is found in the peroxisome. Functionally, acyltransferase which efficiently conjugates very long-chain and long-chain fatty acids to taurine. Shows no conjugation activity in the presence of glycine. The polypeptide is Acyl-coenzyme A amino acid N-acyltransferase 2 (Mus musculus (Mouse)).